Reading from the N-terminus, the 124-residue chain is Small ribosomal subunit protein bS6 (124 aa).

The segment at 96–124 (ETAPSPMMKEVQREEARKAAQTTTEGQPA) is disordered. Over residues 115 to 124 (AQTTTEGQPA) the composition is skewed to polar residues.

The protein belongs to the bacterial ribosomal protein bS6 family.

Functionally, binds together with bS18 to 16S ribosomal RNA. This is Small ribosomal subunit protein bS6 from Cupriavidus metallidurans (strain ATCC 43123 / DSM 2839 / NBRC 102507 / CH34) (Ralstonia metallidurans).